Consider the following 621-residue polypeptide: Protein Tra (621 aa).

A helical transmembrane segment spans residues 126 to 146; the sequence is GAWPVAGSLALIAANVAALVI. Residues 275–465 form the FtsK domain; the sequence is GEPVQVPLGR…LALSTSGESR (191 aa). Position 290 to 297 (290 to 297) interacts with ATP; it reads GTSGSGKS. A helical transmembrane segment spans residues 564 to 584; that stretch reads VAAAIGTGATTVADVATVTGI.

It is found in the cell membrane. Functionally, major protein required for plasmid transfer. This is Protein Tra (tra) from Streptomyces lividans.